The primary structure comprises 163 residues: Secretory-abundant heat soluble protein 53582 (163 aa).

Residues 1–19 (MARLFVAVALFGVVAFAAA) form the signal peptide. The tract at residues 22–51 (EWTGKTWLGSWASTDRAENWEAFVDALGLP) is SAHS-c1. Residues 67–95 (YKQGDKYHHEVSIPSKNFKKAIEYTLGTE) form an SAHS-c2 region. Residues 108-157 (KYTEDGEKLVADVQIPSKNKQIHDIYEVQGDTLTKTYKVGDVVAKRWFTR) are SAHS-c3.

The protein belongs to the Secretory-abundant heat soluble protein (SAHS) family.

The protein resides in the secreted. Functionally, secreted heat soluble protein acting as a molecular shield in water-deficient condition. Tardigrade-specific intrinsically disordered proteins (TDPs) are essential for desiccation tolerance by forming non-crystalline amorphous solids upon desiccation, and this vitrified state mirrors their protective capabilities. The polypeptide is Secretory-abundant heat soluble protein 53582 (Hypsibius exemplaris (Freshwater tardigrade)).